A 58-amino-acid polypeptide reads, in one-letter code: UPF0391 membrane protein Maqu_2901 (58 aa).

Helical transmembrane passes span 4–24 (WAIV…GGIA) and 28–48 (AGFA…SLVV).

This sequence belongs to the UPF0391 family.

The protein resides in the cell membrane. This Marinobacter nauticus (strain ATCC 700491 / DSM 11845 / VT8) (Marinobacter aquaeolei) protein is UPF0391 membrane protein Maqu_2901.